Reading from the N-terminus, the 54-residue chain is Large ribosomal subunit protein bL32c (54 aa).

Over residues Met-1–Trp-20 the composition is skewed to basic residues. Positions Met-1–Asn-54 are disordered. Residues Ala-31–Lys-42 are compositionally biased toward low complexity.

Belongs to the bacterial ribosomal protein bL32 family.

The protein localises to the plastid. Its subcellular location is the chloroplast. This is Large ribosomal subunit protein bL32c from Chlorokybus atmophyticus (Soil alga).